A 150-amino-acid chain; its full sequence is Urease accessory protein UreE (150 aa).

This sequence belongs to the UreE family.

Its subcellular location is the cytoplasm. Functionally, involved in urease metallocenter assembly. Binds nickel. Probably functions as a nickel donor during metallocenter assembly. This is Urease accessory protein UreE from Staphylococcus aureus (strain Mu3 / ATCC 700698).